Reading from the N-terminus, the 660-residue chain is Pro-secreted protein ORF2 (660 aa).

The first 23 residues, 1–23 (MRPRAVLLLLFVLLPMLPAPPAG), serve as a signal peptide directing secretion. Disordered stretches follow at residues 19–43 (APPA…GFWG) and 64–125 (ADVV…VPDV). Residues 28–33 (RRRGRR) carry the Nuclear localization signal motif. A compositionally biased stretch (low complexity) spans 93-124 (RPSAAPRRRSAPAGAAPLTAVSPAPDTAPVPD). 2 N-linked (GlcNAc...) asparagine; by host glycosylation sites follow: Asn137 and Asn310. Residues 368 to 394 (IALTLFNLADTLLGGLPTELISSAGGQ) are particle formation. A glycan (N-linked (GlcNAc...) asparagine; by host) is linked at Asn562. Positions 585-610 (TTSLGAGPTSISAVGVLAPHSALAVL) are oligomerization.

It belongs to the hepevirus capsid protein family. As to quaternary structure, homodimer. In terms of assembly, self-assembles to form the capsid. The capsid is dominated by dimers that define the 30 morphological units. Interacts with phosphorylated protein ORF3. Interacts with host TMEM134. Interacts with host ASGR1 and ASGR2; these interactions facilitate infection of host hepatocytes. In terms of processing, cleaved by host protease in the N-terminus. Post-translationally, N-glycosylated. Not N-glycosylated. The C-terminus of the capsid protein ORF2 is truncated in non-enveloped virions shedded in feces, probably due to host proteases.

It localises to the secreted. It is found in the virion. The protein localises to the host cytoplasm. Its subcellular location is the host endoplasmic reticulum. The protein resides in the host Golgi apparatus. It localises to the host cell surface. It is found in the host nucleus. In terms of biological role, plays a role in the inhibition of host antibody-mediated neutralization without blocking viral cell entry. Forms an icosahedral capsid with a T=1 symmetry and a 34 nm diameter. The capsid is composed of 60 copies linked to each other. Binds to the 5' end of the genomic RNA to mediate genome encapsidation. Binds to heparin surface proteoglycans (HSPGs) to mediate viral entry. Additionally, the interactions with host ASGR1 and ASGR2 facilitate viral infection of hepatocytes. Inhibits IFN production by blocking host TBK1-induced IRF3 phosphorylation. The nuclear form probably modulates host gene expression. The protein is Pro-secreted protein ORF2 of Hepatitis E virus genotype 3 (isolate Human/United States/US2) (HEV-3).